Reading from the N-terminus, the 352-residue chain is Phenylalanine--tRNA ligase alpha subunit (352 aa).

Position 258 (E258) interacts with Mg(2+).

It belongs to the class-II aminoacyl-tRNA synthetase family. Phe-tRNA synthetase alpha subunit type 1 subfamily. As to quaternary structure, tetramer of two alpha and two beta subunits. Requires Mg(2+) as cofactor.

It localises to the cytoplasm. The catalysed reaction is tRNA(Phe) + L-phenylalanine + ATP = L-phenylalanyl-tRNA(Phe) + AMP + diphosphate + H(+). This is Phenylalanine--tRNA ligase alpha subunit from Staphylococcus saprophyticus subsp. saprophyticus (strain ATCC 15305 / DSM 20229 / NCIMB 8711 / NCTC 7292 / S-41).